A 109-amino-acid polypeptide reads, in one-letter code: Protein TAR1 (109 aa).

A disordered region spans residues 62–109; that stretch reads HFTNNWDPRHTGFSPSMTSCSKEHRQGPATKLPSSNYNSDVEDARFQI.

It is found in the mitochondrion. Its function is as follows. May be involved in mtDNA stability or mitochondrial gene expression regulation at the post-transcriptional level. The chain is Protein TAR1 (TAR1-A) from Kluyveromyces lactis (strain ATCC 8585 / CBS 2359 / DSM 70799 / NBRC 1267 / NRRL Y-1140 / WM37) (Yeast).